The chain runs to 549 residues: Hydroxylamine reductase (549 aa).

Positions 5, 8, 17, and 23 each coordinate [4Fe-4S] cluster. Hybrid [4Fe-2O-2S] cluster-binding residues include histidine 243, glutamate 267, cysteine 311, cysteine 403, cysteine 431, cysteine 456, glutamate 491, and lysine 493. Cysteine 403 is modified (cysteine persulfide).

It belongs to the HCP family. It depends on [4Fe-4S] cluster as a cofactor. The cofactor is hybrid [4Fe-2O-2S] cluster.

It localises to the cytoplasm. The catalysed reaction is A + NH4(+) + H2O = hydroxylamine + AH2 + H(+). In terms of biological role, catalyzes the reduction of hydroxylamine to form NH(3) and H(2)O. This is Hydroxylamine reductase from Desulfitobacterium hafniense (strain DSM 10664 / DCB-2).